The following is a 122-amino-acid chain: uncharacterized protein (122 aa).

Residues 1 to 24 are Cytoplasmic-facing; it reads MKNRKFSNLLLLRLRILCFNKKPA. The chain crosses the membrane as a helical span at residues 25-45; the sequence is FAATSYAFFFRNFSVLIFIMV. Topologically, residues 46-57 are extracellular; the sequence is PDEKENGAAADN. A helical transmembrane segment spans residues 58–78; the sequence is SFSLLIGRGVVLFLFYCPTAL. Residues 79-122 are Cytoplasmic-facing; that stretch reads KMHGPVPAHWFCDKNIEAIQSDGQIRLLRSGPFPWSHGTCIRGA.

Its subcellular location is the membrane. This is an uncharacterized protein from Saccharomyces cerevisiae (strain ATCC 204508 / S288c) (Baker's yeast).